The primary structure comprises 202 residues: Zinc metalloproteinase barnettlysin-1 (202 aa).

In terms of domain architecture, Peptidase M12B spans 6–200 (RYVELFIVVD…MKENPQCILN (195 aa)). Residues glutamate 9 and aspartate 93 each contribute to the Ca(2+) site. 3 disulfide bridges follow: cysteine 117/cysteine 197, cysteine 157/cysteine 181, and cysteine 159/cysteine 164. Residue histidine 142 participates in Zn(2+) binding. Residue glutamate 143 is part of the active site. Histidine 146 and histidine 152 together coordinate Zn(2+). Residues cysteine 197 and asparagine 200 each contribute to the Ca(2+) site.

As to quaternary structure, monomer. The cofactor is Zn(2+). As to expression, expressed by the venom gland.

It localises to the secreted. Its function is as follows. Non-hemorrhagic metalloproteinase that hydrolyzes the alpha chains of fibrinogen and fibrin but has no activity on beta- and gamma-chains. Cleaves X-Leu bonds. Inhibits platelet aggregation induced by the von Willebrand factor (VWF) (IC(50) is 1.4 uM) and type I collagen (IC(50) is 3.2 uM). Acts by cleaving the vWF and its receptor GPIb, and by cleaving the collagen-binding Alpha-2A domain of the collagen receptor alpha-2/beta-1 integrin (ITGA2/ITGB1). Also degrades the extracellular matrix protein fibronectin (FN1), but has no effect on laminin and type I collagen. In Bothrops barnetti (Barnett's lancehead), this protein is Zinc metalloproteinase barnettlysin-1.